Here is a 113-residue protein sequence, read N- to C-terminus: uncharacterized protein (113 aa).

Residues 7–29 form a helical membrane-spanning segment; that stretch reads FFILIVLLFTVFSLKEFIPNTFC.

The protein localises to the membrane. This is an uncharacterized protein from Aquifex aeolicus (strain VF5).